The primary structure comprises 457 residues: MSKRYAVVLAAGQGTRMKSKLYKVLHPVCGKPMVEHVVDQISTLNVDKVVTIVGHGAEKVQEHLAGKSEFVKQEEQLGTAHAVLQAKAELAGKDGVTLVVCGDTPLIEASTMEALLKYHHEKRAKATILTTVIEDPTGYGRIIRDDLGIVEKIVEHKDATEKEQRISEINTGTYCFDNKALFEALENVSNDNVQGEYYLPDVIKILKDSDEVVAAYRMESFEESLGVNDRIALAEASRLMQRRINENHMRNGVTLVNPENTYIDIDVKIGQDTVIEPGVMLRGETVIGDDCVVTSGSEIVNSVIGERVHVRTSSIFESKVGDDVQIGPYAHLRPESDIHDHVKIGNYVETKKAVVGEGTKLPHFIYMGDAEIGKNVNVGCGSIAVNYDGKNKAKTIIGDNVFVGCNSNLIAPVKVGDRAFIAAGSTITKDVPDDALGIARAKQDNKLGYAKHLNHGK.

The pyrophosphorylase stretch occupies residues 1–230 (MSKRYAVVLA…FEESLGVNDR (230 aa)). Residues 9 to 12 (LAAG), lysine 23, glutamine 73, and 78 to 79 (GT) each bind UDP-N-acetyl-alpha-D-glucosamine. A Mg(2+)-binding site is contributed by aspartate 103. UDP-N-acetyl-alpha-D-glucosamine-binding residues include glycine 140, glutamate 155, asparagine 170, and asparagine 228. Asparagine 228 is a binding site for Mg(2+). A linker region spans residues 231 to 251 (IALAEASRLMQRRINENHMRN). The tract at residues 252–457 (GVTLVNPENT…GYAKHLNHGK (206 aa)) is N-acetyltransferase. 2 residues coordinate UDP-N-acetyl-alpha-D-glucosamine: arginine 333 and lysine 351. The Proton acceptor role is filled by histidine 363. UDP-N-acetyl-alpha-D-glucosamine contacts are provided by tyrosine 366 and asparagine 377. Acetyl-CoA-binding positions include 386-387 (NY), alanine 423, and arginine 440.

This sequence in the N-terminal section; belongs to the N-acetylglucosamine-1-phosphate uridyltransferase family. It in the C-terminal section; belongs to the transferase hexapeptide repeat family. As to quaternary structure, homotrimer. The cofactor is Mg(2+).

The protein localises to the cytoplasm. The catalysed reaction is alpha-D-glucosamine 1-phosphate + acetyl-CoA = N-acetyl-alpha-D-glucosamine 1-phosphate + CoA + H(+). The enzyme catalyses N-acetyl-alpha-D-glucosamine 1-phosphate + UTP + H(+) = UDP-N-acetyl-alpha-D-glucosamine + diphosphate. The protein operates within nucleotide-sugar biosynthesis; UDP-N-acetyl-alpha-D-glucosamine biosynthesis; N-acetyl-alpha-D-glucosamine 1-phosphate from alpha-D-glucosamine 6-phosphate (route II): step 2/2. Its pathway is nucleotide-sugar biosynthesis; UDP-N-acetyl-alpha-D-glucosamine biosynthesis; UDP-N-acetyl-alpha-D-glucosamine from N-acetyl-alpha-D-glucosamine 1-phosphate: step 1/1. It functions in the pathway bacterial outer membrane biogenesis; LPS lipid A biosynthesis. Catalyzes the last two sequential reactions in the de novo biosynthetic pathway for UDP-N-acetylglucosamine (UDP-GlcNAc). The C-terminal domain catalyzes the transfer of acetyl group from acetyl coenzyme A to glucosamine-1-phosphate (GlcN-1-P) to produce N-acetylglucosamine-1-phosphate (GlcNAc-1-P), which is converted into UDP-GlcNAc by the transfer of uridine 5-monophosphate (from uridine 5-triphosphate), a reaction catalyzed by the N-terminal domain. This chain is Bifunctional protein GlmU, found in Listeria monocytogenes serotype 4b (strain F2365).